A 261-amino-acid polypeptide reads, in one-letter code: High-affinity zinc uptake system membrane protein ZnuB (261 aa).

7 helical membrane-spanning segments follow: residues 5-27 (FFFG…LFII), 48-70 (FAVL…FGML), 85-107 (ILGI…ISNF), 128-150 (IVIL…DLML), 172-194 (ILIF…LIAI), 215-234 (AFFS…LMSV), and 238-257 (LAIS…ISNL).

Belongs to the ABC-3 integral membrane protein family.

It is found in the cell membrane. Its function is as follows. Involved in the high-affinity zinc uptake transport system. The sequence is that of High-affinity zinc uptake system membrane protein ZnuB (znuB) from Buchnera aphidicola subsp. Baizongia pistaciae (strain Bp).